The chain runs to 421 residues: 2-deoxystreptamine N-acetyl-D-glucosaminyltransferase (421 aa).

Belongs to the glycosyltransferase group 1 family. Glycosyltransferase 4 subfamily.

The catalysed reaction is 2-deoxystreptamine + UDP-N-acetyl-alpha-D-glucosamine = 2'-N-acetylparomamine + UDP + H(+). It functions in the pathway antibiotic biosynthesis; neomycin biosynthesis. Its function is as follows. Glycosyltransferase involved in the biosynthesis of neomycin by mediating conversion of 2-deoxystreptamine (2-DOS) to 2'-N-acetylparomamine using UDP-alpha-D-glucosamine as sugar donor. The polypeptide is 2-deoxystreptamine N-acetyl-D-glucosaminyltransferase (neoD) (Streptomyces fradiae (Streptomyces roseoflavus)).